The chain runs to 423 residues: CDP-diacylglycerol--serine O-phosphatidyltransferase 2 (423 aa).

Helical transmembrane passes span 38-58 (PHTISVLLVGACLLIWASGAL), 77-97 (WAMIAVFLAYCTLQAPSTILI), 103-123 (VWRLVHGLAVVYLVALAFLLF), 195-215 (LLLWVLSIGFELMELTFRHML), 222-242 (WWDSIILDILICNWFGIWAGM), 294-314 (FVQVLFLCVVFMTVELNTFFL), 319-339 (WIPPRNPLVVYRLILWWLIAI), 359-379 (GAFCWLSLAICIVELLICMKF), and 390-410 (TWLIIFWSSVGVALVVFLLAW).

Belongs to the CDP-alcohol phosphatidyltransferase class-I family.

The protein resides in the endoplasmic reticulum membrane. It carries out the reaction a CDP-1,2-diacyl-sn-glycerol + L-serine = a 1,2-diacyl-sn-glycero-3-phospho-L-serine + CMP + H(+). It participates in phospholipid metabolism; phosphatidylethanolamine biosynthesis; phosphatidylethanolamine from CDP-diacylglycerol: step 1/2. Catalyzes a base-exchange reaction in which the polar head group of phosphatidylethanolamine (PE) or phosphatidylcholine (PC) is replaced by L-serine. This is CDP-diacylglycerol--serine O-phosphatidyltransferase 2 (PSS2) from Oryza sativa subsp. japonica (Rice).